Reading from the N-terminus, the 385-residue chain is 3-dehydroquinate synthase (385 aa).

NAD(+)-binding positions include 122-126 (GVIGD), 146-147 (TT), lysine 159, and lysine 168. Glutamate 201, histidine 264, and histidine 282 together coordinate Zn(2+).

The protein belongs to the sugar phosphate cyclases superfamily. Dehydroquinate synthase family. The cofactor is Co(2+). Requires Zn(2+) as cofactor. NAD(+) is required as a cofactor.

The protein resides in the cytoplasm. The catalysed reaction is 7-phospho-2-dehydro-3-deoxy-D-arabino-heptonate = 3-dehydroquinate + phosphate. It participates in metabolic intermediate biosynthesis; chorismate biosynthesis; chorismate from D-erythrose 4-phosphate and phosphoenolpyruvate: step 2/7. Its function is as follows. Catalyzes the conversion of 3-deoxy-D-arabino-heptulosonate 7-phosphate (DAHP) to dehydroquinate (DHQ). This Rhodospirillum rubrum (strain ATCC 11170 / ATH 1.1.1 / DSM 467 / LMG 4362 / NCIMB 8255 / S1) protein is 3-dehydroquinate synthase.